A 337-amino-acid polypeptide reads, in one-letter code: Cytoskeleton protein RodZ (337 aa).

The Cytoplasmic segment spans residues 1-111 (MNTEATHDQN…LGKRRKKRDG (111 aa)). The HTH cro/C1-type domain maps to 19-71 (LRNAREQLGLSQQAVAERLCLKVSTVRDIEEDKAPADLASTFLRGYIRSYARL). The segment at residues 30–49 (QQAVAERLCLKVSTVRDIEE) is a DNA-binding region (H-T-H motif). Residues 112 to 132 (WLMTFTWLVLFVVIGLSGAWW) traverse the membrane as a helical; Signal-anchor for type II membrane protein segment. Residues 133-337 (WQDHKAQQEE…TLNAEQSPAQ (205 aa)) lie on the Periplasmic side of the membrane. Positions 145-167 (TMADQSSAELSSNSEQGQSVPLN) are enriched in polar residues. Residues 145–236 (TMADQSSAEL…TAATTPDGAA (92 aa)) are disordered. Residues 168 to 207 (TSTTTDPATTSTPPASVDTTATNTQTPAVTAPAPAVDPQQ) are compositionally biased toward low complexity. Over residues 208 to 218 (NAVVSPSQANV) the composition is skewed to polar residues. Over residues 219–236 (DTAATPAPTAATTPDGAA) the composition is skewed to low complexity.

Belongs to the RodZ family.

The protein localises to the cell inner membrane. Functionally, cytoskeletal protein that is involved in cell-shape control through regulation of the length of the long axis. In Escherichia coli O9:H4 (strain HS), this protein is Cytoskeleton protein RodZ.